Here is a 351-residue protein sequence, read N- to C-terminus: Flagellar P-ring protein (351 aa).

The signal sequence occupies residues methionine 1 to alanine 20.

It belongs to the FlgI family. The basal body constitutes a major portion of the flagellar organelle and consists of four rings (L,P,S, and M) mounted on a central rod.

The protein resides in the periplasm. It localises to the bacterial flagellum basal body. Functionally, assembles around the rod to form the L-ring and probably protects the motor/basal body from shearing forces during rotation. In Sulfurimonas denitrificans (strain ATCC 33889 / DSM 1251) (Thiomicrospira denitrificans (strain ATCC 33889 / DSM 1251)), this protein is Flagellar P-ring protein.